A 157-amino-acid chain; its full sequence is Endoribonuclease YbeY (157 aa).

Residues His122, His126, and His132 each contribute to the Zn(2+) site.

This sequence belongs to the endoribonuclease YbeY family. Zn(2+) serves as cofactor.

It localises to the cytoplasm. Its function is as follows. Single strand-specific metallo-endoribonuclease involved in late-stage 70S ribosome quality control and in maturation of the 3' terminus of the 16S rRNA. The polypeptide is Endoribonuclease YbeY (Bacillus subtilis (strain 168)).